The primary structure comprises 396 residues: S-adenosylmethionine synthase (396 aa).

ATP is bound at residue H16. A Mg(2+)-binding site is contributed by D18. K(+) is bound at residue E44. E57 and Q100 together coordinate L-methionine. The flexible loop stretch occupies residues 100–110 (QSPDIAQGVNE). ATP is bound by residues 175–177 (DAK), 242–243 (RF), D251, 257–258 (RK), A274, and K278. Residue D251 coordinates L-methionine. Position 282 (K282) interacts with L-methionine.

Belongs to the AdoMet synthase family. Homotetramer; dimer of dimers. Requires Mg(2+) as cofactor. The cofactor is K(+).

Its subcellular location is the cytoplasm. It catalyses the reaction L-methionine + ATP + H2O = S-adenosyl-L-methionine + phosphate + diphosphate. It functions in the pathway amino-acid biosynthesis; S-adenosyl-L-methionine biosynthesis; S-adenosyl-L-methionine from L-methionine: step 1/1. Catalyzes the formation of S-adenosylmethionine (AdoMet) from methionine and ATP. The overall synthetic reaction is composed of two sequential steps, AdoMet formation and the subsequent tripolyphosphate hydrolysis which occurs prior to release of AdoMet from the enzyme. This chain is S-adenosylmethionine synthase, found in Streptococcus suis (strain 05ZYH33).